Here is a 325-residue protein sequence, read N- to C-terminus: Glutarate 2-hydroxylase (325 aa).

3 residues coordinate Fe cation: His160, Asp162, and His292.

Belongs to the glutarate hydroxylase family. As to quaternary structure, homotetramer. Fe(2+) is required as a cofactor.

The enzyme catalyses glutarate + 2-oxoglutarate + O2 = (S)-2-hydroxyglutarate + succinate + CO2. The protein operates within amino-acid degradation. Acts as an alpha-ketoglutarate-dependent dioxygenase catalyzing hydroxylation of glutarate (GA) to L-2-hydroxyglutarate (L2HG). Functions in a L-lysine degradation pathway that proceeds via cadaverine, glutarate and L-2-hydroxyglutarate. The sequence is that of Glutarate 2-hydroxylase from Shigella boydii serotype 18 (strain CDC 3083-94 / BS512).